A 178-amino-acid chain; its full sequence is Peptide deformylase (178 aa).

The Fe cation site is built by Cys-102 and His-144. The active site involves Glu-145. His-148 lines the Fe cation pocket.

This sequence belongs to the polypeptide deformylase family. It depends on Fe(2+) as a cofactor.

The catalysed reaction is N-terminal N-formyl-L-methionyl-[peptide] + H2O = N-terminal L-methionyl-[peptide] + formate. Its function is as follows. Removes the formyl group from the N-terminal Met of newly synthesized proteins. Requires at least a dipeptide for an efficient rate of reaction. N-terminal L-methionine is a prerequisite for activity but the enzyme has broad specificity at other positions. The sequence is that of Peptide deformylase from Leptospira interrogans serogroup Icterohaemorrhagiae serovar copenhageni (strain Fiocruz L1-130).